The sequence spans 331 residues: Biotin synthase (331 aa).

Residues 52–277 form the Radical SAM core domain; the sequence is PEVEVEGIVS…RTILRYAGGR (226 aa). Cys-67, Cys-71, and Cys-74 together coordinate [4Fe-4S] cluster. [2Fe-2S] cluster is bound by residues Cys-110, Cys-202, and Arg-272.

This sequence belongs to the radical SAM superfamily. Biotin synthase family. As to quaternary structure, homodimer. The cofactor is [4Fe-4S] cluster. Requires [2Fe-2S] cluster as cofactor.

The catalysed reaction is (4R,5S)-dethiobiotin + (sulfur carrier)-SH + 2 reduced [2Fe-2S]-[ferredoxin] + 2 S-adenosyl-L-methionine = (sulfur carrier)-H + biotin + 2 5'-deoxyadenosine + 2 L-methionine + 2 oxidized [2Fe-2S]-[ferredoxin]. The protein operates within cofactor biosynthesis; biotin biosynthesis; biotin from 7,8-diaminononanoate: step 2/2. Catalyzes the conversion of dethiobiotin (DTB) to biotin by the insertion of a sulfur atom into dethiobiotin via a radical-based mechanism. This is Biotin synthase from Salinispora tropica (strain ATCC BAA-916 / DSM 44818 / JCM 13857 / NBRC 105044 / CNB-440).